The primary structure comprises 105 residues: Heat shock protein HspQ (105 aa).

Residues 75–105 form a disordered region; sequence GEAQEAHPEQPSLDELAESIRHQLQAPRLRN.

The protein belongs to the HspQ family.

The protein localises to the cytoplasm. In terms of biological role, involved in the degradation of certain denaturated proteins, including DnaA, during heat shock stress. This chain is Heat shock protein HspQ, found in Serratia proteamaculans (strain 568).